Reading from the N-terminus, the 276-residue chain is Formamidopyrimidine-DNA glycosylase (276 aa).

Residue Pro2 is the Schiff-base intermediate with DNA of the active site. The Proton donor role is filled by Glu3. Lys60 (proton donor; for beta-elimination activity) is an active-site residue. Residues His93, Arg112, and Arg155 each contribute to the DNA site. An FPG-type zinc finger spans residues 240 to 274 (LVYGRKDEACTKCGAEIIRFVVGGRGTHICPDCQK). Arg264 functions as the Proton donor; for delta-elimination activity in the catalytic mechanism.

It belongs to the FPG family. Monomer. It depends on Zn(2+) as a cofactor.

The catalysed reaction is Hydrolysis of DNA containing ring-opened 7-methylguanine residues, releasing 2,6-diamino-4-hydroxy-5-(N-methyl)formamidopyrimidine.. It catalyses the reaction 2'-deoxyribonucleotide-(2'-deoxyribose 5'-phosphate)-2'-deoxyribonucleotide-DNA = a 3'-end 2'-deoxyribonucleotide-(2,3-dehydro-2,3-deoxyribose 5'-phosphate)-DNA + a 5'-end 5'-phospho-2'-deoxyribonucleoside-DNA + H(+). Its function is as follows. Involved in base excision repair of DNA damaged by oxidation or by mutagenic agents. Acts as a DNA glycosylase that recognizes and removes damaged bases. Has a preference for oxidized purines, such as 7,8-dihydro-8-oxoguanine (8-oxoG). Has AP (apurinic/apyrimidinic) lyase activity and introduces nicks in the DNA strand. Cleaves the DNA backbone by beta-delta elimination to generate a single-strand break at the site of the removed base with both 3'- and 5'-phosphates. The protein is Formamidopyrimidine-DNA glycosylase of Brevibacillus brevis (strain 47 / JCM 6285 / NBRC 100599).